The chain runs to 242 residues: Small ribosomal subunit protein uS2 (242 aa).

The protein belongs to the universal ribosomal protein uS2 family.

This is Small ribosomal subunit protein uS2 from Shouchella clausii (strain KSM-K16) (Alkalihalobacillus clausii).